A 611-amino-acid polypeptide reads, in one-letter code: tRNA uridine 5-carboxymethylaminomethyl modification enzyme MnmG (611 aa).

FAD is bound by residues 8-13 (GAGHAG), valine 120, and serine 175. 268–282 (GPRYCPSIEDKIVRF) provides a ligand contact to NAD(+). An FAD-binding site is contributed by glutamine 365.

The protein belongs to the MnmG family. Homodimer. Heterotetramer of two MnmE and two MnmG subunits. Requires FAD as cofactor.

It localises to the cytoplasm. In terms of biological role, NAD-binding protein involved in the addition of a carboxymethylaminomethyl (cmnm) group at the wobble position (U34) of certain tRNAs, forming tRNA-cmnm(5)s(2)U34. This chain is tRNA uridine 5-carboxymethylaminomethyl modification enzyme MnmG, found in Mycoplasmoides gallisepticum (strain R(low / passage 15 / clone 2)) (Mycoplasma gallisepticum).